The sequence spans 318 residues: Homoserine kinase (318 aa).

97–107 (PIGSGLGSSAC) provides a ligand contact to ATP.

It belongs to the GHMP kinase family. Homoserine kinase subfamily.

The protein resides in the cytoplasm. The catalysed reaction is L-homoserine + ATP = O-phospho-L-homoserine + ADP + H(+). The protein operates within amino-acid biosynthesis; L-threonine biosynthesis; L-threonine from L-aspartate: step 4/5. Its function is as follows. Catalyzes the ATP-dependent phosphorylation of L-homoserine to L-homoserine phosphate. This Aliivibrio fischeri (strain ATCC 700601 / ES114) (Vibrio fischeri) protein is Homoserine kinase.